Reading from the N-terminus, the 335-residue chain is Phosphate acyltransferase (335 aa).

It belongs to the PlsX family. As to quaternary structure, homodimer. Probably interacts with PlsY.

The protein resides in the cytoplasm. It catalyses the reaction a fatty acyl-[ACP] + phosphate = an acyl phosphate + holo-[ACP]. It functions in the pathway lipid metabolism; phospholipid metabolism. In terms of biological role, catalyzes the reversible formation of acyl-phosphate (acyl-PO(4)) from acyl-[acyl-carrier-protein] (acyl-ACP). This enzyme utilizes acyl-ACP as fatty acyl donor, but not acyl-CoA. This chain is Phosphate acyltransferase, found in Streptococcus pyogenes serotype M28 (strain MGAS6180).